The following is a 216-amino-acid chain: Imidazole glycerol phosphate synthase subunit HisH (216 aa).

The Glutamine amidotransferase type-1 domain occupies 2 to 216 (SVAIVDYGSG…LISNFLKWKP (215 aa)). C88 serves as the catalytic Nucleophile. Active-site residues include H196 and E198.

As to quaternary structure, heterodimer of HisH and HisF.

It is found in the cytoplasm. The enzyme catalyses 5-[(5-phospho-1-deoxy-D-ribulos-1-ylimino)methylamino]-1-(5-phospho-beta-D-ribosyl)imidazole-4-carboxamide + L-glutamine = D-erythro-1-(imidazol-4-yl)glycerol 3-phosphate + 5-amino-1-(5-phospho-beta-D-ribosyl)imidazole-4-carboxamide + L-glutamate + H(+). The catalysed reaction is L-glutamine + H2O = L-glutamate + NH4(+). Its pathway is amino-acid biosynthesis; L-histidine biosynthesis; L-histidine from 5-phospho-alpha-D-ribose 1-diphosphate: step 5/9. In terms of biological role, IGPS catalyzes the conversion of PRFAR and glutamine to IGP, AICAR and glutamate. The HisH subunit catalyzes the hydrolysis of glutamine to glutamate and ammonia as part of the synthesis of IGP and AICAR. The resulting ammonia molecule is channeled to the active site of HisF. The chain is Imidazole glycerol phosphate synthase subunit HisH from Rhodopseudomonas palustris (strain ATCC BAA-98 / CGA009).